A 385-amino-acid polypeptide reads, in one-letter code: Protein pelota homolog (385 aa).

This sequence belongs to the eukaryotic release factor 1 family. Pelota subfamily. As to quaternary structure, component of the Pelota-HBS1L complex, also named Dom34-Hbs1 complex, composed of PELO and HBS1L. It depends on a divalent metal cation as a cofactor.

Its subcellular location is the cytoplasm. Its function is as follows. Component of the Pelota-HBS1L complex, a complex that recognizes stalled ribosomes and triggers the No-Go Decay (NGD) pathway. In the Pelota-HBS1L complex, PELO recognizes ribosomes stalled at the 3' end of an mRNA and engages stalled ribosomes by destabilizing mRNA in the mRNA channel. Following mRNA extraction from stalled ribosomes by the SKI complex, the Pelota-HBS1L complex promotes recruitment of ABCE1, which drives the disassembly of stalled ribosomes, followed by degradation of damaged mRNAs as part of the NGD pathway. The polypeptide is Protein pelota homolog (pelo) (Danio rerio (Zebrafish)).